The following is a 753-amino-acid chain: MAGLGRLDPGPRTVMPAWKREILERRRAKLAALSGGPGSGAAPDGPNERLVLAESLGPLSQNPFMRLESERRRGARPAQQLLELYCRVPGVRTIRADNILIIESAPGFPPAVPPASSIRAAEVVVYEEPQPGRVSRLLEKFDSPAAPRRRGSPERFRPALPQLPVAPASAATRAPTNRSLAPAPPVLPSQPAPPISPVPVAQRAGQRSACCEPAHPDGTAGPGARRSDFLQKTGSNSFTVHPRGLPGSAVNRSLSNGPMTQESPAGPANGLSGSPPVPGKWKPKVESKEPSLHPPPSPGTPSATPVGPPAFLAPSPASATPSQRQWVSSATSANDSFEIRPSSKPDMETIPIGDLQARALANLRVNSRNSFVLIPKRKAPGNYPSAAGRQFEEPKGEVGWASQSQGLGSQLVSTVDGAPALEKSSLAAEMQWAVREGGCPRPAISDTDKSVRRQRPASPPPFLPATTEAEPAEGLGVPGLTKNGQEPVRPGLPVTFIDEVDSEEAAFQEAKLPSSAVGVPSQYHLHPSTPGHTSELLNRGSNTFTVVPKRKPGTLQEPHLSQTNGQFQQGAEEQDADSLSGPHTTLENALKKRYPTVNEIEVIGGYLALQKSCLIKAGSSRKKMKISFNDKSLHTTFEYPSESSLAQEEAEEEEEEEEEEEGEDGEEEEVGPDSEKSFTVLLPRATFVSSVGPESSSGLSSYTPKHSMAFSKWQEQTLVQAPTEVELPPKEVMLTPASQNDLSDFRSEPALYF.

Residues 141-348 (FDSPAAPRRR…IRPSSKPDME (208 aa)) form a disordered region. Residues 182 to 197 (PAPPVLPSQPAPPISP) are compositionally biased toward pro residues. 2 stretches are compositionally biased toward polar residues: residues 230-239 (LQKTGSNSFT) and 250-263 (VNRSLSNGPMTQES). S274 is modified (phosphoserine). A compositionally biased stretch (low complexity) spans 300-322 (TPSATPVGPPAFLAPSPASATPS). Residues 323–335 (QRQWVSSATSAND) are compositionally biased toward polar residues. Residues 337 to 347 (FEIRPSSKPDM) are compositionally biased toward basic and acidic residues. 3 positions are modified to phosphoserine: S402, S458, and S502. Residues 438–488 (GCPRPAISDTDKSVRRQRPASPPPFLPATTEAEPAEGLGVPGLTKNGQEPV) form a disordered region. 2 disordered regions span residues 544-583 (FTVVPKRKPGTLQEPHLSQTNGQFQQGAEEQDADSLSGPH) and 637-676 (FEYPSESSLAQEEAEEEEEEEEEEEGEDGEEEEVGPDSEK). Polar residues predominate over residues 559 to 571 (HLSQTNGQFQQGA). A compositionally biased stretch (acidic residues) spans 648 to 672 (EEAEEEEEEEEEEEGEDGEEEEVGP).

It belongs to the taperin family. In terms of assembly, interacts with GRXCR2; the interaction restricts TPRN to the stereocilum basal region. Interacts with actin ACTB; the interaction may stabilize stereocilia. Interacts with CLIC5. Interacts with PTPRQ. TPRN, CLIC5 and PTPQR form concentric rings at the base of stereocilia and may form a complex. Interacts with phosphatase PPP1CA; the interaction results in inhibition of PPC1A phosphatase activity. Interacts with DNA damage response proteins XRCC6/KU70, XRCC5/KU80, PARP1, TOP1 and TOP2A; these interactions recruit TPRN to sites of DNA damage where it may play a role in DNA repair.

It localises to the cell projection. Its subcellular location is the stereocilium. The protein localises to the microvillus. It is found in the nucleus. The protein resides in the nucleoplasm. It localises to the cytoplasm. Essential for hearing. Required for maintenance of stereocilia on both inner and outer hair cells. Necessary for the integrity of the stereociliary rootlet. May act as an actin cytoskeleton regulator involved in the regulation of actin dynamics at the pointed end in hair cells. Forms rings at the base of stereocilia and binds actin filaments in the stereocilia which may stabilize the stereocilia. Acts as a strong inhibitor of PPP1CA phosphatase activity. Recruited to sites of DNA damage and may play a role in DNA damage repair. In Rattus norvegicus (Rat), this protein is Taperin (Tprn).